Consider the following 159-residue polypeptide: Cyclic pyranopterin monophosphate synthase (159 aa).

Residues 75–77 (LCH) and 113–114 (ME) each bind substrate. Asp-128 is an active-site residue.

It belongs to the MoaC family. In terms of assembly, homohexamer; trimer of dimers.

The catalysed reaction is (8S)-3',8-cyclo-7,8-dihydroguanosine 5'-triphosphate = cyclic pyranopterin phosphate + diphosphate. The protein operates within cofactor biosynthesis; molybdopterin biosynthesis. Its function is as follows. Catalyzes the conversion of (8S)-3',8-cyclo-7,8-dihydroguanosine 5'-triphosphate to cyclic pyranopterin monophosphate (cPMP). In Cereibacter sphaeroides (strain ATCC 17029 / ATH 2.4.9) (Rhodobacter sphaeroides), this protein is Cyclic pyranopterin monophosphate synthase.